The following is a 1046-amino-acid chain: Arrestin-related trafficking adapter 3 (1046 aa).

Residues 115-141 (YPPTEQKSKKKMDASAPNESNNAANNF) are disordered. Residues 128–140 (ASAPNESNNAANN) are compositionally biased toward low complexity. A phosphoserine mark is found at S155 and S162. Low complexity-rich tracts occupy residues 168–179 (SGLSSLNLSPLG) and 198–210 (RSSS…GPSR). Residues 168-230 (SGLSSLNLSP…ATSPSVSHHN (63 aa)) are disordered. 2 positions are modified to phosphoserine: S213 and S586. Positions 605 to 614 (TRNSRQFNRN) are enriched in polar residues. Disordered stretches follow at residues 605–627 (TRNS…IFNS) and 651–820 (PLSP…FAHS). The span at 669–694 (FDFSSDFISDAASGTTTTEVSSSESS) shows a compositional bias: low complexity. Positions 734-785 (KNSDKNSSETLNKKESMSKIEENKHKRETTPKKRENRDVKSLSTPQREESKD) are enriched in basic and acidic residues. Residues 802–811 (LSLSSSLHSS) show a composition bias toward low complexity. Phosphoserine is present on residues S826 and S838. The tract at residues 868-889 (NHDKNELNRHSTNTSSTPASAR) is disordered. Over residues 877–889 (HSTNTSSTPASAR) the composition is skewed to polar residues. S900 carries the phosphoserine modification. The interval 986–1017 (QNSAESDHNNDIFTQGSGLTESSKNSDSEERF) is disordered. Positions 996–1008 (DIFTQGSGLTESS) are enriched in polar residues. Residues S1022 and S1023 each carry the phosphoserine modification.

This sequence belongs to the ALY1 family. In terms of assembly, interacts with PCL6, PCL7 and RSP5. In terms of processing, ubiquitinated by RSP5. Post-translationally, phosphorylated by the cyclin-CDKs PCL6-PHO85 and PCL7-PHO85.

It is found in the cytoplasm. Its function is as follows. May regulate endocytosis by recruiting RSP5 ubiquitin ligase activity to specific plasma membrane proteins in response to extracellular stimuli. The protein is Arrestin-related trafficking adapter 3 (ALY2) of Saccharomyces cerevisiae (strain ATCC 204508 / S288c) (Baker's yeast).